Reading from the N-terminus, the 577-residue chain is MATAQLYCVCRQPYDVSRFMIECDICKDWFHGSCVEVEEHYAVDIDVYHCPNCDVHHGPSLMKKRRNWHRHDYTEPDDGSKPVQAGTSVFVRELQARTFPSGDEILQPMHGGQVTQRYLERHGFRYPIIVSKREELGLRLPPPDFSIKDVERYVGGNKVIDVIDVARQADSKMKLKAFVKYYYSPQRPKVLNVISLEFSDTKMAELVVVPDIAQKMSWVENYWPDDSYFPKPFVQKYCLMGVKDSYTDFHIDFGGTSVWYHVLWGEKIFYLIKPTPANLALYEEWSSSPNQSEVFFGEKVDKCYKCVVRQGTTLLIPTGWIHAVLTSQDCMAFGGNFLHNLNIGMQLRCYEMERRLKTPDLFKFPYFEAICWYVAKNLLETLKESREENCLPPEYLIKGVKALITALRNWLKREVTEPASEVPDHIRPNHLIKMLTKEIQYLENGNCGNKPMKLQESSICPSTRSAHERGSHARKTARRLRGHHHHHHRHHHHHHHHHHHNHQHSDGPKAPSHLDIYEQHTQEVLKRLEMGPYEEDASFNLKVNGKFNKVSTASAAAAERSLENDLRLVLCNGQIVR.

Residues 5–56 form a PHD-type zinc finger; that stretch reads QLYCVCRQPYDVSRFMIECDICKDWFHGSCVEVEEHYAVDIDVYHCPNCDVH. The region spanning 198 to 354 is the JmjC domain; the sequence is FSDTKMAELV…MQLRCYEMER (157 aa). Residue Thr247 coordinates substrate. 2 residues coordinate Fe cation: His250 and Asp252. Residue Lys267 coordinates substrate. His322 provides a ligand contact to Fe cation. The segment at 460–513 is disordered; that stretch reads CPSTRSAHERGSHARKTARRLRGHHHHHHRHHHHHHHHHHHNHQHSDGPKAPSH. Residues 472 to 502 are compositionally biased toward basic residues; it reads HARKTARRLRGHHHHHHRHHHHHHHHHHHNH.

The protein belongs to the JHDM1 histone demethylase family. JHDM1D subfamily. Requires Fe(2+) as cofactor. Predominantly expressed in brain.

It is found in the nucleus. Its function is as follows. Histone demethylase required for brain development. Specifically demethylates dimethylated 'Lys-9' and 'Lys-27' (H3K9me2 and H3K27me2, respectively) of histone H3 and monomethylated histone H4 'Lys-20' residue (H4K20Me1), thereby playing a central role in histone code. The polypeptide is Lysine-specific demethylase 7B (jhdm1db) (Danio rerio (Zebrafish)).